The primary structure comprises 253 residues: Retinoic acid early-inducible protein 1-gamma (253 aa).

The N-terminal stretch at 1-28 is a signal peptide; that stretch reads MAKAAVTKRHHFMIQKLLILLSYGYTNG. Cysteines 37 and 56 form a disulfide. N-linked (GlcNAc...) asparagine glycosylation is found at Asn38, Asn70, Asn83, Asn143, and Asn156. A disulfide bridge connects residues Cys90 and Cys190. The interval 198-230 is disordered; sequence LKQSKEKPRSTSRSPSITQLTSTSPLPPPSHST. Over residues 211–221 the composition is skewed to low complexity; the sequence is SPSITQLTSTS. Ser227 carries the GPI-anchor amidated serine lipid modification. Positions 228–253 are cleaved as a propeptide — removed in mature form; the sequence is HSTSKKGFISVGLIFISLLFAFAFAM.

This sequence belongs to the NKG2D ligand family. Glycosylated. In terms of tissue distribution, expressed predominantly in embryonic brain.

Its subcellular location is the cell membrane. Its function is as follows. Acts as a ligand for KLRK1. This is Retinoic acid early-inducible protein 1-gamma (Raet1c) from Mus musculus (Mouse).